Consider the following 424-residue polypeptide: Histidine--tRNA ligase (424 aa).

Belongs to the class-II aminoacyl-tRNA synthetase family. As to quaternary structure, homodimer.

The protein localises to the cytoplasm. The catalysed reaction is tRNA(His) + L-histidine + ATP = L-histidyl-tRNA(His) + AMP + diphosphate + H(+). The sequence is that of Histidine--tRNA ligase from Salmonella typhi.